The primary structure comprises 434 residues: Enolase (434 aa).

Q167 contributes to the (2R)-2-phosphoglycerate binding site. The Proton donor role is filled by E209. Mg(2+) contacts are provided by D246, E291, and D318. (2R)-2-phosphoglycerate-binding residues include K343, R372, S373, and K394. Residue K343 is the Proton acceptor of the active site.

It belongs to the enolase family. As to quaternary structure, component of the RNA degradosome, a multiprotein complex involved in RNA processing and mRNA degradation. Mg(2+) serves as cofactor.

Its subcellular location is the cytoplasm. It localises to the secreted. It is found in the cell surface. The catalysed reaction is (2R)-2-phosphoglycerate = phosphoenolpyruvate + H2O. Its pathway is carbohydrate degradation; glycolysis; pyruvate from D-glyceraldehyde 3-phosphate: step 4/5. Functionally, catalyzes the reversible conversion of 2-phosphoglycerate (2-PG) into phosphoenolpyruvate (PEP). It is essential for the degradation of carbohydrates via glycolysis. The chain is Enolase from Buchnera aphidicola subsp. Schizaphis graminum (strain Sg).